A 509-amino-acid polypeptide reads, in one-letter code: Heat shock 70 kDa protein 14-A (509 aa).

This sequence belongs to the heat shock protein 70 family. As to quaternary structure, component of ribosome-associated complex (RAC).

The protein localises to the cytoplasm. It is found in the cytosol. Its function is as follows. Component of the ribosome-associated complex (RAC), a complex involved in folding or maintaining nascent polypeptides in a folding-competent state. The sequence is that of Heat shock 70 kDa protein 14-A (hspa14-a) from Xenopus laevis (African clawed frog).